Reading from the N-terminus, the 116-residue chain is Vesicle-associated membrane protein 5 (116 aa).

The Cytoplasmic segment spans residues 1 to 72; the sequence is MAGIELERCQ…CWENIRYRIC (72 aa). The v-SNARE coiled-coil homology domain maps to 5-65; sequence ELERCQQQAN…QNLAQKKCWE (61 aa). Residues Ser41, Ser48, and Ser49 each carry the phosphoserine modification. A helical; Anchor for type IV membrane protein membrane pass occupies residues 73–93; it reads VGLVVVGVLLIILIVLLVVFL. Over 94-116 the chain is Vesicular; the sequence is PQSSDSSSAPRTQDAGIASGPGN. The disordered stretch occupies residues 96-116; sequence SSDSSSAPRTQDAGIASGPGN.

The protein belongs to the synaptobrevin family. (Microbial infection) Targeted and hydrolyzed by C.botulinum neurotoxin type X (BoNT/X) which hydrolyzes the 40-Arg-|-Ser-41 bond and probably inhibits neurotransmitter release. It remains unknown whether BoNT/X is ever produced, or what organisms it targets.

The protein localises to the cell membrane. It is found in the endomembrane system. It localises to the golgi apparatus. The protein resides in the trans-Golgi network membrane. Its function is as follows. May participate in trafficking events that are associated with myogenesis, such as myoblast fusion and/or GLUT4 trafficking. The protein is Vesicle-associated membrane protein 5 (VAMP5) of Homo sapiens (Human).